A 94-amino-acid chain; its full sequence is UPF0213 protein BH0048 (94 aa).

A GIY-YIG domain is found at Met-1–Gln-76.

The protein belongs to the UPF0213 family.

In Halalkalibacterium halodurans (strain ATCC BAA-125 / DSM 18197 / FERM 7344 / JCM 9153 / C-125) (Bacillus halodurans), this protein is UPF0213 protein BH0048.